The sequence spans 298 residues: Serpentine receptor class delta-34 (298 aa).

The next 6 membrane-spanning stretches (helical) occupy residues 10–30 (SSIM…FTQV), 54–74 (ACFF…FAIP), 99–119 (MILL…VITY), 158–178 (LATN…IVFI), 207–227 (LTIQ…AHLI), and 242–262 (VLYM…IVTI).

This sequence belongs to the nematode receptor-like protein srd family.

The protein resides in the membrane. In Caenorhabditis elegans, this protein is Serpentine receptor class delta-34 (srd-34).